The following is a 501-amino-acid chain: uncharacterized protein (501 aa).

Residues 14 to 237 (EKFGFDRQKT…GFSKKRDNVN (224 aa)) enclose the BAR domain. Residue threonine 285 is modified to Phosphothreonine. Disordered stretches follow at residues 302 to 321 (IASS…DVSD) and 329 to 414 (SAVD…RSYS). Residues 309-320 (QHTEDNYNKDVS) show a composition bias toward basic and acidic residues. Over residues 390–402 (SQCNVSPSPSNIS) the composition is skewed to polar residues. Serine 414 carries the phosphoserine modification. The region spanning 421–487 (SSRKVVRMKY…PSNYCVPAHP (67 aa)) is the SH3 domain.

It is found in the cytoplasm. This is an uncharacterized protein from Schizosaccharomyces pombe (strain 972 / ATCC 24843) (Fission yeast).